Reading from the N-terminus, the 369-residue chain is Peptide chain release factor 2 (369 aa).

Q247 carries the N5-methylglutamine modification.

The protein belongs to the prokaryotic/mitochondrial release factor family. Methylated by PrmC. Methylation increases the termination efficiency of RF2.

Its subcellular location is the cytoplasm. In terms of biological role, peptide chain release factor 2 directs the termination of translation in response to the peptide chain termination codons UGA and UAA. This chain is Peptide chain release factor 2, found in Phenylobacterium zucineum (strain HLK1).